We begin with the raw amino-acid sequence, 58 residues long: Small ribosomal subunit protein bS21 (58 aa).

Positions 35-58 (REHYESPSVRRKKKSEAARKRRYK) are disordered. Positions 43 to 58 (VRRKKKSEAARKRRYK) are enriched in basic residues.

This sequence belongs to the bacterial ribosomal protein bS21 family.

This Acetivibrio thermocellus (strain ATCC 27405 / DSM 1237 / JCM 9322 / NBRC 103400 / NCIMB 10682 / NRRL B-4536 / VPI 7372) (Clostridium thermocellum) protein is Small ribosomal subunit protein bS21.